A 314-amino-acid chain; its full sequence is Malate dehydrogenase (314 aa).

Residues 11–16 and D35 each bind NAD(+); that span reads GSGNIG. The substrate site is built by R84 and R90. Residues N97 and 120–122 each bind NAD(+); that span reads ITN. The substrate site is built by N122 and R153. H177 serves as the catalytic Proton acceptor.

This sequence belongs to the LDH/MDH superfamily. MDH type 3 family.

It catalyses the reaction (S)-malate + NAD(+) = oxaloacetate + NADH + H(+). Its function is as follows. Catalyzes the reversible oxidation of malate to oxaloacetate. The chain is Malate dehydrogenase from Rickettsia bellii (strain RML369-C).